A 248-amino-acid chain; its full sequence is Large ribosomal subunit protein uL30 (248 aa).

N-acetylmethionine is present on M1. 4 repeat units span residues 7 to 18, 19 to 30, 31 to 42, and 43 to 54. A 4 X 12 AA tandem repeats region spans residues 7–54; it reads KKKKVPAVPETLKKKRKNFAELKIKRLRKKFAQKMLRKARRKLIYEKA. Residue T17 is modified to Phosphothreonine. Residue K124 is modified to N6-acetyllysine. K127 is modified (N6-succinyllysine). Y139 carries the post-translational modification Phosphotyrosine.

This sequence belongs to the universal ribosomal protein uL30 family. As to quaternary structure, component of the large ribosomal subunit. Homodimer. Interacts with DHX33.

The protein resides in the cytoplasm. In terms of biological role, component of the large ribosomal subunit. The ribosome is a large ribonucleoprotein complex responsible for the synthesis of proteins in the cell. Binds to G-rich structures in 28S rRNA and in mRNAs. Plays a regulatory role in the translation apparatus; inhibits cell-free translation of mRNAs. This Bos taurus (Bovine) protein is Large ribosomal subunit protein uL30 (RPL7).